The primary structure comprises 249 residues: MEEIVIVGRHAVKEAIVSGHTINKILIQDTIKKGQINEILKLANSNKIIVQSVPKSKIDGLSDSPHQGVAAYIAPYEYADFDAFVAQQKAQDKLSTVLILDGLEDPHNLGSILRTADASGVDGVIIPKRRSVALTQTVAKASTGAIQHIPVMRVTNLANTIETLKDNGYWIVGTEAENSTDYREMDAGMPLGIVIGSEGQGMSRLVKEKCDFYINIPMVGHVNSLNASVAASLMMYEVFRKRNYIGDKA.

Residues G196, I216, and L225 each coordinate S-adenosyl-L-methionine.

This sequence belongs to the class IV-like SAM-binding methyltransferase superfamily. RNA methyltransferase TrmH family.

This is Putative TrmH family tRNA/rRNA methyltransferase from Staphylococcus saprophyticus subsp. saprophyticus (strain ATCC 15305 / DSM 20229 / NCIMB 8711 / NCTC 7292 / S-41).